A 150-amino-acid chain; its full sequence is MPLDVWIAFSYFIDFFQWLFMLNAEVMRAIAVNDTLAEKTAESIYYISGFLKYFSDVFRDTVNIVSANDTMMRYSVGIWQKVAGNATYVFGDDNANWGIAYIWRKSYECIQTGGYCQNQAPNLTYNALQFFKWMFAALAELGKKFSLIYT.

The signal sequence occupies residues 1–28 (MPLDVWIAFSYFIDFFQWLFMLNAEVMR).

This is an uncharacterized protein from Archaeoglobus fulgidus (strain ATCC 49558 / DSM 4304 / JCM 9628 / NBRC 100126 / VC-16).